The sequence spans 1045 residues: Putative sodium-coupled neutral amino acid transporter 10 (1045 aa).

A run of 10 helical transmembrane segments spans residues 8–28, 33–53, 85–105, 117–137, 150–170, 226–246, 269–289, 320–340, 342–362, and 375–395; these read LIMN…PFCF, ILLG…SCMF, SMIG…GDLG, VSEG…VLPL, FSAM…LSSF, IFAL…FFGY, MIRV…ILPC, ILTL…PNVE, ILGL…PALI, and FILG…LTVT. Composition is skewed to basic and acidic residues over residues 412 to 453, 460 to 479, and 503 to 546; these read KEEK…EEQI, PQKE…RPDQ, and VDEK…DQAE. 2 disordered regions span residues 412-584 and 606-658; these read KEEK…EQPP and EIAE…AEAG. Polar residues predominate over residues 564 to 573; sequence NDPNKQQLVN. Over residues 627 to 658 the composition is skewed to basic and acidic residues; that stretch reads PIKDEKNEQIPGDPGKESHVEPKAEDNQAEAG.

Belongs to the amino acid/polyamine transporter 2 family.

The protein resides in the membrane. Putative sodium-dependent amino acid/proton antiporter. The sequence is that of Putative sodium-coupled neutral amino acid transporter 10 (slc38a10) from Xenopus laevis (African clawed frog).